The sequence spans 278 residues: Esterase dbaE (278 aa).

Catalysis depends on charge relay system residues Ser124, Asp220, and His248.

This sequence belongs to the LovG family.

It participates in secondary metabolite biosynthesis. Esterase; part of the gene cluster that mediates the biosynthesis of the antibiotic 2,4-dihydroxy-3-methyl-6-(2-oxopropyl)benzaldehyde (DHMBA) and its derivatives. The direct non-reducing polyketide synthase dbaI product is 2,4-dihydroxy-3-methyl-6-(2-oxopropyl)benzaldehyde (DHMBA), produced by condensation of one acetyl-CoA starter unit with 4 malonyl-CoA units and one methylation step. The FAD-dependent monooxygenase dbaH is responsible for the synthesis of yellow pigments derived from the oxidation of DHMBA. The roles of dbaB, C, E and F have still to be determined. This chain is Esterase dbaE, found in Emericella nidulans (strain FGSC A4 / ATCC 38163 / CBS 112.46 / NRRL 194 / M139) (Aspergillus nidulans).